The chain runs to 918 residues: Leucine--tRNA ligase (918 aa).

Residues Pro-40–His-51 carry the 'HIGH' region motif. The short motif at Lys-692 to Ser-696 is the 'KMSKS' region element. Residue Lys-695 participates in ATP binding.

Belongs to the class-I aminoacyl-tRNA synthetase family.

The protein resides in the cytoplasm. The catalysed reaction is tRNA(Leu) + L-leucine + ATP = L-leucyl-tRNA(Leu) + AMP + diphosphate. This chain is Leucine--tRNA ligase, found in Azobacteroides pseudotrichonymphae genomovar. CFP2.